We begin with the raw amino-acid sequence, 429 residues long: tRNA modification GTPase MnmE (429 aa).

Positions 20, 77, and 117 each coordinate (6S)-5-formyl-5,6,7,8-tetrahydrofolate. The TrmE-type G domain maps to 213 to 353; the sequence is GFEVAILGAP…LVKAVSHRLS (141 aa). K(+) is bound at residue N223. Residues 223 to 228, 242 to 248, and 267 to 270 contribute to the GTP site; these read NVGKSS, SSIAGTT, and DTAG. S227 contributes to the Mg(2+) binding site. 3 residues coordinate K(+): S242, I244, and T247. T248 provides a ligand contact to Mg(2+). Residue K429 coordinates (6S)-5-formyl-5,6,7,8-tetrahydrofolate.

Belongs to the TRAFAC class TrmE-Era-EngA-EngB-Septin-like GTPase superfamily. TrmE GTPase family. In terms of assembly, homodimer. Heterotetramer of two MnmE and two MnmG subunits. The cofactor is K(+).

The protein localises to the cytoplasm. Its function is as follows. Exhibits a very high intrinsic GTPase hydrolysis rate. Involved in the addition of a carboxymethylaminomethyl (cmnm) group at the wobble position (U34) of certain tRNAs, forming tRNA-cmnm(5)s(2)U34. The chain is tRNA modification GTPase MnmE from Dinoroseobacter shibae (strain DSM 16493 / NCIMB 14021 / DFL 12).